The primary structure comprises 346 residues: tRNA(Ile)-lysidine synthase (346 aa).

Residue 32-37 participates in ATP binding; sequence SGGPDS.

This sequence belongs to the tRNA(Ile)-lysidine synthase family.

It is found in the cytoplasm. It carries out the reaction cytidine(34) in tRNA(Ile2) + L-lysine + ATP = lysidine(34) in tRNA(Ile2) + AMP + diphosphate + H(+). Functionally, ligates lysine onto the cytidine present at position 34 of the AUA codon-specific tRNA(Ile) that contains the anticodon CAU, in an ATP-dependent manner. Cytidine is converted to lysidine, thus changing the amino acid specificity of the tRNA from methionine to isoleucine. This is tRNA(Ile)-lysidine synthase from Rhodopseudomonas palustris (strain ATCC BAA-98 / CGA009).